Consider the following 105-residue polypeptide: Large ribosomal subunit protein eL42 (105 aa).

Residues 28-57 form a disordered region; sequence YKKGKDSLAAQGKRRYDRKQSGYGGQTKPV.

Belongs to the eukaryotic ribosomal protein eL42 family.

The sequence is that of Large ribosomal subunit protein eL42 (RPL44) from Gossypium hirsutum (Upland cotton).